Here is a 380-residue protein sequence, read N- to C-terminus: Putative S-(hydroxymethyl)glutathione dehydrogenase 2 (380 aa).

Cys-50 contributes to the Zn(2+) binding site. His-51 provides a ligand contact to NAD(+). Zn(2+) contacts are provided by His-72, Glu-73, Cys-102, Cys-105, Cys-108, Cys-116, and Cys-179. Residues 204–209 (GLGSVG), Asp-228, and 297–299 (IGV) each bind NAD(+).

It belongs to the zinc-containing alcohol dehydrogenase family. Class-III subfamily. It depends on Zn(2+) as a cofactor.

The catalysed reaction is a primary alcohol + NAD(+) = an aldehyde + NADH + H(+). It catalyses the reaction a secondary alcohol + NAD(+) = a ketone + NADH + H(+). The enzyme catalyses S-(hydroxymethyl)glutathione + NADP(+) = S-formylglutathione + NADPH + H(+). It carries out the reaction S-(hydroxymethyl)glutathione + NAD(+) = S-formylglutathione + NADH + H(+). The catalysed reaction is S-nitrosoglutathione + NADH + H(+) = S-(hydroxysulfenamide)glutathione + NAD(+). Oxidizes long-chain alcohols and, in the presence of glutathione, is able to oxidize formaldehyde. Also acts as a S-nitroso-glutathione reductase by catalyzing the NADH-dependent reduction of S-nitrosoglutathione, thereby regulating protein S-nitrosylation. The chain is Putative S-(hydroxymethyl)glutathione dehydrogenase 2 from Schizosaccharomyces pombe (strain 972 / ATCC 24843) (Fission yeast).